The following is a 342-amino-acid chain: uncharacterized protein (342 aa).

The next 10 membrane-spanning stretches (helical) occupy residues 8-28 (FESSWFAAVMGTGVLAVTSLF), 39-59 (ISFLLFYFNILLFFVFLMLWI), 79-99 (SSFSPTVAVAMLVLGIDFILI), 108-128 (IFWVFGAIGMFLFSLIVPFYM), 142-162 (GWYIPPVGLIVIPIAGSLIMP), 175-195 (INYFGWGAGFFLYLALLAVVI), 207-227 (AMAPTVWINLGPIGAGIVALI), 242-262 (FYIFSFIFWGFGLWWSLMAII), 276-296 (AMSWWAFIFPLGVYIASTHLV), and 304-324 (IVDYIGFGLYWLLFFFWIVTL).

This sequence belongs to the tellurite-resistance/dicarboxylate transporter (TDT) family.

It is found in the cell membrane. This is an uncharacterized protein from Methanocaldococcus jannaschii (strain ATCC 43067 / DSM 2661 / JAL-1 / JCM 10045 / NBRC 100440) (Methanococcus jannaschii).